A 257-amino-acid chain; its full sequence is MSSAPNGRKKRPSRSTRSSIFQISKPPLQSGDWERRGSGSESAHKTQRALDDCKMLVQEFNTQVALYRELVISIGDVSVSCPSLRAEMHKTRTKGCEMARQAHQKLAAISGPEDGEIHPEICRLYIQLQCCLEMYTTEMLKSICLLGSLQFHRKGKEPGGGTKSLDCKIEESAETPALEDSSSSPVDSQQHSWQVSTDIENTERDMREMKNLLSKLRETMPLPLKNQDDSSLLNLTPYPLVRRRKRRFFGLCCLISS.

2 disordered regions span residues 1 to 45 and 174 to 196; these read MSSA…SAHK and ETPA…WQVS. A compositionally biased stretch (basic and acidic residues) spans 32 to 45; that stretch reads DWERRGSGSESAHK. Over residues 180–192 the composition is skewed to low complexity; the sequence is DSSSSPVDSQQHS. Positions 242 to 247 match the Nuclear localization signal motif; it reads RRRKRR. Residues Cys252 and Cys253 are each lipidated (S-palmitoyl cysteine).

This sequence belongs to the RGS7BP/RGS9BP family. As to quaternary structure, interacts with 'R7' family proteins RGS6, RGS7, RGS9 and RGS11. Component of some R7-Gbeta5 complex composed of some R7 protein (RGS6, RGS7, RGS9 or RGS11), Gbeta5 (GNB5) and RGS7BP. Post-translationally, palmitoylated. Undergoes rapid palmitoylation turnover. De novo and turnover palmitoylation are both mediated by ZDHHC2. Palmitoylation regulates the cell membrane and nuclear shuttling and the regulation of GPCR signaling. Upon depalmitoylation, it is targeted from the plasma membrane into the nucleus. GPCR signaling inhibits depalmitoylation and promotes localization to the plasma membrane.

It is found in the nucleus. Its subcellular location is the cytoplasm. It localises to the cell membrane. Functionally, regulator of G protein-coupled receptor (GPCR) signaling. Regulatory subunit of the R7-Gbeta5 complexes that acts by controlling the subcellular location of the R7-Gbeta5 complexes. When palmitoylated, it targets the R7-Gbeta5 complexes to the plasma membrane, leading to inhibit G protein alpha subunits. When it is unpalmitoylated, the R7-Gbeta5 complexes undergo a nuclear/cytoplasmic shuttling. May also act by controlling the proteolytic stability of R7 proteins, probably by protecting them from degradation. This is Regulator of G-protein signaling 7-binding protein (RGS7BP) from Homo sapiens (Human).